The following is a 1011-amino-acid chain: Probable beta-galactosidase E (1011 aa).

The signal sequence occupies residues 1-19; sequence MKSLLKRLIALAAAYSVAA. Substrate is bound by residues tyrosine 92, asparagine 136, alanine 137, glutamate 138, and asparagine 195. The Proton donor role is filled by glutamate 196. The N-linked (GlcNAc...) asparagine glycan is linked to asparagine 202. Position 261 (tyrosine 261) interacts with substrate. Cysteines 267 and 316 form a disulfide. The active-site Nucleophile is glutamate 299. Tyrosine 365 provides a ligand contact to substrate. 12 N-linked (GlcNAc...) asparagine glycosylation sites follow: asparagine 406, asparagine 423, asparagine 446, asparagine 455, asparagine 588, asparagine 622, asparagine 704, asparagine 745, asparagine 759, asparagine 772, asparagine 778, and asparagine 913.

The protein belongs to the glycosyl hydrolase 35 family.

Its subcellular location is the secreted. The catalysed reaction is Hydrolysis of terminal non-reducing beta-D-galactose residues in beta-D-galactosides.. Functionally, cleaves beta-linked terminal galactosyl residues from gangliosides, glycoproteins, and glycosaminoglycans. This chain is Probable beta-galactosidase E (lacE), found in Aspergillus fumigatus (strain CBS 144.89 / FGSC A1163 / CEA10) (Neosartorya fumigata).